Here is a 228-residue protein sequence, read N- to C-terminus: Probable septum site-determining protein MinC (228 aa).

Belongs to the MinC family. As to quaternary structure, interacts with MinD and FtsZ.

Cell division inhibitor that blocks the formation of polar Z ring septums. Rapidly oscillates between the poles of the cell to destabilize FtsZ filaments that have formed before they mature into polar Z rings. Prevents FtsZ polymerization. The polypeptide is Probable septum site-determining protein MinC (Yersinia enterocolitica serotype O:8 / biotype 1B (strain NCTC 13174 / 8081)).